The chain runs to 932 residues: MKRFLWILLPPVLVVVARMHVEWVWFAQFNWQSVLFQRWMLQLLFAGAGSIPVFLAVLWLRAFDRIDDPPRQQKRPIDGMRFSLVLMVSGLAFLACSVVLSDLAILAWKQPFSLSHWQSTGHSMASEWKALLPIQLAIAGVSLCRPQLRRWVAVAMGFALVLVVSRAWGVWSLAWLIPDEGLREPLLGTDLSFGLGRFSAIQLGLELLVLSGTFTTAHAVWGRVTVSPHLSDWSMPALGNRSYRWLSIGVGTNLLGVAGLVWLSRHQLLWHQHGLVAGAGWLQQHLTLPFRSLLAFVLLVLGVSCIVRGIGHLQRLLLLCVAAIVIIESTLTPLTRWLVVRPQELALQAPYLETAIRSTRHGFQLDRIQRRRTEPNVDLTEEDLESGASTLRNVRLWDSGPLLETNRQLQQLRVYYRFSNAAVDRYPLIPDSDTSQQVIISARELDQSALPRRSKTWQNRHFVFTHGNGFTVSPVNTRGTDGLPSYVISDLGSNTRIEGNRDLGIKRKDVEAAIPAQNAALYFGMLPSPYAVVPTEVDEFDYPDGDLNVYSHYAGSAGVPIGSLIQRLCASIYLAEPRLLTTKAIQKDSRVLLRREVRQRIRAIAPFLDLRGDPYLVSVPGDNLELGTSGNRIQHQFWIAEGYTHSATYAYSAAVSKTDSDRYLRNSVKVVVDAYNGSMRLFVSEPDDPIIKSWQKLFPQLFESIESMPNILKAHLLVPEDFFKVQVSQLQRYHVEDPRIFYSGDDVWQVPLEVYGGEQISVEPYHITAQIEGNNSSEFLLLQPLTPLARPNLTAWLAARNDAEHYGELLLIDFPKDRPILGPEQIQALINQDPEVSKVFSLWDGGGSELVQGNLLVLPVGTSLLYVEPVYLKATKGGLPSLVRIVVSDGRGIAMDVNLSAAIDRLIKKTPYGITEGVSTDRLDESRKRSIS.

A run of 9 helical transmembrane segments spans residues F4–V24, M40–L60, V85–I105, M124–C144, W151–W171, I201–W221, Y243–L263, L293–L313, and R315–T335.

It belongs to the UPF0182 family.

It is found in the cell membrane. This is UPF0182 protein Syncc9902_1151 from Synechococcus sp. (strain CC9902).